The following is an 82-amino-acid chain: Small ribosomal subunit protein uS17 (82 aa).

It belongs to the universal ribosomal protein uS17 family. In terms of assembly, part of the 30S ribosomal subunit.

Functionally, one of the primary rRNA binding proteins, it binds specifically to the 5'-end of 16S ribosomal RNA. This Ehrlichia ruminantium (strain Gardel) protein is Small ribosomal subunit protein uS17.